Consider the following 595-residue polypeptide: MNKNICLSASHKQNNRDDPIINELINYFGNETFTIQSTRIGVPVVWVTREQILDFLIFLKKKPNSYLMLYDLHGVDERLRNNREGLPAVDFTVFYHLLSIKSNSDIILKVPLLEGDISLPTATNIFSNANWYERETWDMFGIIFHGHPHLTRIIMPPSWVGHPLRKDYPARATEFNPFVLTKEKEELEMDSLTFKPEKWGIKHSNHKDDFMFLNFGPNHPSAHGAFRIVLQLDGEEIVDCIPDIGYHHRGVEKMSERQSWHSYIPYTDRVEYLGGCVNEMPYVLAVEKLAGIVVPDRVNVIRIMLSELFRINSHLLYISTYIQDVGGMTPIFLAFTDRQKIYNVVEAITGARMHPAWFRIGGVAHDLPHGWNMLLKELLDWLPNRLEHYVKVALENSILRSRSEGIASYSAKEALEWGVTGAALRATGINFDVRKWRPYSGYDNFEFEIPVGNGISDCYSRVMLKVEEIRQSIRILKQCLHNMPAGPFKADHPLTTPPPKERTLQHIETLISHFLQVSWGPIIPANESFQMIEATKGINSYYLTSDGNTMSYRTRIRTPSFPHLQQIPSVIRGSLISDLIVYLGSIDFVMSDVDR.

The tract at residues 1-185 (MNKNICLSAS…NPFVLTKEKE (185 aa)) is NADH dehydrogenase I subunit C. The NADH dehydrogenase I subunit D stretch occupies residues 209–595 (DFMFLNFGPN…IDFVMSDVDR (387 aa)).

It in the N-terminal section; belongs to the complex I 30 kDa subunit family. This sequence in the C-terminal section; belongs to the complex I 49 kDa subunit family. As to quaternary structure, NDH-1 is composed of 13 different subunits. Subunits NuoB, CD, E, F, and G constitute the peripheral sector of the complex.

It is found in the cell inner membrane. It carries out the reaction a quinone + NADH + 5 H(+)(in) = a quinol + NAD(+) + 4 H(+)(out). In terms of biological role, NDH-1 shuttles electrons from NADH, via FMN and iron-sulfur (Fe-S) centers, to quinones in the respiratory chain. The immediate electron acceptor for the enzyme in this species is believed to be ubiquinone. Couples the redox reaction to proton translocation (for every two electrons transferred, four hydrogen ions are translocated across the cytoplasmic membrane), and thus conserves the redox energy in a proton gradient. This is NADH-quinone oxidoreductase subunit C/D from Baumannia cicadellinicola subsp. Homalodisca coagulata.